The following is a 476-amino-acid chain: Bifunctional protein GlmU (476 aa).

Residues 1–235 (MTALDIIIMA…ALQVAGVNSP (235 aa)) form a pyrophosphorylase region. UDP-N-acetyl-alpha-D-glucosamine is bound by residues Lys-23, Gln-81, 86 to 87 (GT), 108 to 110 (SGD), Gly-145, Glu-160, and Asn-233. Position 110 (Asp-110) interacts with Mg(2+). Asn-233 contacts Mg(2+). Residues 236–256 (AQLADLERAHQRAQAAALMEQ) are linker. Residues 257 to 476 (GVRLADPARF…WKRPAKQAKG (220 aa)) are N-acetyltransferase. UDP-N-acetyl-alpha-D-glucosamine is bound by residues Arg-351 and Lys-369. The active-site Proton acceptor is the His-381. The UDP-N-acetyl-alpha-D-glucosamine site is built by Tyr-384 and Asn-395. Acetyl-CoA-binding positions include Ala-398, 404 to 405 (NY), Ser-423, Gly-441, and Arg-458.

The protein in the N-terminal section; belongs to the N-acetylglucosamine-1-phosphate uridyltransferase family. It in the C-terminal section; belongs to the transferase hexapeptide repeat family. As to quaternary structure, homotrimer. The cofactor is Mg(2+).

The protein localises to the cytoplasm. The enzyme catalyses alpha-D-glucosamine 1-phosphate + acetyl-CoA = N-acetyl-alpha-D-glucosamine 1-phosphate + CoA + H(+). The catalysed reaction is N-acetyl-alpha-D-glucosamine 1-phosphate + UTP + H(+) = UDP-N-acetyl-alpha-D-glucosamine + diphosphate. It functions in the pathway nucleotide-sugar biosynthesis; UDP-N-acetyl-alpha-D-glucosamine biosynthesis; N-acetyl-alpha-D-glucosamine 1-phosphate from alpha-D-glucosamine 6-phosphate (route II): step 2/2. It participates in nucleotide-sugar biosynthesis; UDP-N-acetyl-alpha-D-glucosamine biosynthesis; UDP-N-acetyl-alpha-D-glucosamine from N-acetyl-alpha-D-glucosamine 1-phosphate: step 1/1. Its pathway is bacterial outer membrane biogenesis; LPS lipid A biosynthesis. In terms of biological role, catalyzes the last two sequential reactions in the de novo biosynthetic pathway for UDP-N-acetylglucosamine (UDP-GlcNAc). The C-terminal domain catalyzes the transfer of acetyl group from acetyl coenzyme A to glucosamine-1-phosphate (GlcN-1-P) to produce N-acetylglucosamine-1-phosphate (GlcNAc-1-P), which is converted into UDP-GlcNAc by the transfer of uridine 5-monophosphate (from uridine 5-triphosphate), a reaction catalyzed by the N-terminal domain. This chain is Bifunctional protein GlmU, found in Acidovorax sp. (strain JS42).